A 531-amino-acid polypeptide reads, in one-letter code: UDP-glucuronosyltransferase 1A6 (531 aa).

An N-terminal signal peptide occupies residues 1-26 (MACLLSAAQRASAGVLFVALWGTVLG). A glycan (N-linked (GlcNAc...) asparagine) is linked at N294. The helical transmembrane segment at 489 to 505 (VIGFLLAIVLTVAFVTF) threads the bilayer.

This sequence belongs to the UDP-glycosyltransferase family.

Its subcellular location is the microsome. It is found in the endoplasmic reticulum membrane. The enzyme catalyses glucuronate acceptor + UDP-alpha-D-glucuronate = acceptor beta-D-glucuronoside + UDP + H(+). It carries out the reaction (5Z,8Z,11Z,14Z)-eicosatetraenoate + UDP-alpha-D-glucuronate = O-[(5Z),(8Z),(11Z),(14Z)-eicosatetraenoyl]-beta-D-glucuronate + UDP. It catalyses the reaction 15-hydroxy-(5Z,8Z,11Z,13E)-eicosatetraenoate + UDP-alpha-D-glucuronate = 15-O-(beta-D-glucuronosyl)-(5Z,8Z,11Z,14Z)-eicosatetraenoate + UDP + H(+). The catalysed reaction is (E)-ferulate + UDP-alpha-D-glucuronate = (E)-4-O-(beta-D-glucuronosyl)-ferulate + UDP + H(+). The enzyme catalyses (E)-ferulate + UDP-alpha-D-glucuronate = (E)-ferulic acid beta-D-glucuronate ester + UDP. In terms of biological role, UDP-glucuronosyltransferase (UGT) that catalyzes phase II biotransformation reactions in which lipophilic substrates are conjugated with glucuronic acid to facilitate their inactivation and excretion from the body. Essential for the elimination and detoxification of drugs, xenobiotics and endogenous compounds. Involved in the glucuronidation of arachidonic acid (AA) and AA-derived eicosanoids including 15-HETE and 20-HETE. Conjugates small planar phenolic molecules such as 4-nitrophenol, 1-naphthol, and 4-methylumbelliferone. The bulky phenol 4-hydroxybiphenyl, androgens and estrogens are not substrates. 2-hydroxybiphenyl is an excellent substrate. Involved in the glucuronidation of the phytochemical ferulic acid at the phenolic or the carboxylic acid group. In Oryctolagus cuniculus (Rabbit), this protein is UDP-glucuronosyltransferase 1A6 (UGT1).